Consider the following 391-residue polypeptide: Autophagy-related protein 18d (391 aa).

Positions 1-24 (MDPRRNFQPGGYDSRNTFTSGSFG) are disordered. 4 WD repeats span residues 31 to 69 (SDEAELVSVSWNQDYSCFAAGTSHGFRIYNCEPFKETFR), 74 to 118 (DGGF…CISE), 203 to 243 (AHDS…RLQE), and 248 to 287 (VDRADIYSIALSPNVQWLAVSSDKGTVHIFSLRVRVIGED).

The protein belongs to the WD repeat PROPPIN family. In terms of assembly, component of the PI(3,5)P2 regulatory complex at least composed of ATG18, SAC/FIG4, FAB1 and VAC14. As to expression, expressed in roots, stems, flowers and leaves.

Its subcellular location is the preautophagosomal structure membrane. It localises to the vacuole membrane. Its function is as follows. The PI(3,5)P2 regulatory complex regulates both the synthesis and turnover of phosphatidylinositol 3,5-bisphosphate (PtdIns(3,5)P2). Required for autophagy. This is Autophagy-related protein 18d (ATG18D) from Arabidopsis thaliana (Mouse-ear cress).